A 294-amino-acid polypeptide reads, in one-letter code: Small ribosomal subunit protein uS2 (294 aa).

The interval 254 to 294 is disordered; the sequence is ESSNTEAPVAETAAAEAPVADAAIEAPVAEEAKTTEADDTK. Over residues 259 to 282 the composition is skewed to low complexity; it reads EAPVAETAAAEAPVADAAIEAPVA. Positions 283–294 are enriched in basic and acidic residues; that stretch reads EEAKTTEADDTK.

The protein belongs to the universal ribosomal protein uS2 family.

The polypeptide is Small ribosomal subunit protein uS2 (Renibacterium salmoninarum (strain ATCC 33209 / DSM 20767 / JCM 11484 / NBRC 15589 / NCIMB 2235)).